The primary structure comprises 352 residues: MESSLQKLKFQDIDINLIPTAKWTTKLQYILYTWCQSILHVAMFFSDIYTCIKLLAFNTWSNNIIQPFLEFRISKWLFSGCILCSSLILIWELVIGLRVYRKKEITSNYMNGISRLINCLFNFKKYQIFELIVLTDEKKFSKWLFFSYFEISGCLRLLFGDSPRQIINGLTLWSVLLTVSNETSSGTHSTQSLGNLDDLNGIINKIKHIAKTNYEESVILSFMLFSFIIWVILISKLILSIIIFIIFIRPRFLSSKRKVKGYELKLRKYVSKVIDENLSRTVYELGILIDDEEEGTICGDNKTQKKFDYDSPDYGDESTIPSYYCYSDVETYERVYTPIKAYFPQKYKHKYI.

The Extracellular segment spans residues 1 to 36 (MESSLQKLKFQDIDINLIPTAKWTTKLQYILYTWCQ). Residues 37 to 57 (SILHVAMFFSDIYTCIKLLAF) traverse the membrane as a helical segment. Over 58–76 (NTWSNNIIQPFLEFRISKW) the chain is Cytoplasmic. Residues 77–97 (LFSGCILCSSLILIWELVIGL) traverse the membrane as a helical segment. Topologically, residues 98–227 (RVYRKKEITS…VILSFMLFSF (130 aa)) are extracellular. A helical membrane pass occupies residues 228 to 248 (IIWVILISKLILSIIIFIIFI). At 249 to 352 (RPRFLSSKRK…FPQKYKHKYI (104 aa)) the chain is on the cytoplasmic side.

This sequence belongs to the KCH1 low affinity K(+) transporter family.

The protein resides in the cell membrane. It localises to the bud tip. It is found in the vacuole lumen. The enzyme catalyses K(+)(in) = K(+)(out). Its function is as follows. Low affinity potassium transporter that, with KCH1, participates in high-affinity Ca(2+) influx system (HACS) activation during the response to mating pheromone. Directly promotes K(+) influx and HACS may electrochemically respond to this K(+) influx. KCH1 and PRM6/KCH2 act at the apex of the calcium signaling pathway that is used for survival during prolonged exposures to mating pheromones. The sequence is that of Pheromone-regulated membrane protein 6 from Saccharomyces cerevisiae (strain ATCC 204508 / S288c) (Baker's yeast).